The primary structure comprises 527 residues: Dual specificity protein kinase shkA (527 aa).

Residues 45–304 enclose the Protein kinase domain; that stretch reads ITTESILGDG…GIVSELEEII (260 aa). Residues 51–59 and Lys72 contribute to the ATP site; that span reads LGDGSFGTV. Asp167 serves as the catalytic Proton acceptor. In terms of domain architecture, SH2 spans 424-513; that stretch reads WFHGDISTSE…INTPCLGSRF (90 aa).

This sequence belongs to the protein kinase superfamily. TKL Ser/Thr protein kinase family. SH2 domain-containing protein kinase subfamily.

It localises to the membrane. The enzyme catalyses L-seryl-[protein] + ATP = O-phospho-L-seryl-[protein] + ADP + H(+). It catalyses the reaction L-threonyl-[protein] + ATP = O-phospho-L-threonyl-[protein] + ADP + H(+). Its function is as follows. Required for proper chemotaxis and phagocytosis; proper spatiotemporal control of F-actin levels in chemotaxing cells. Negative regulator of the PI3K (phosphatidylinositol 3 kinase) pathway. Predominantly phosphorylates serines and threonines and tyrosines at a lower level. The sequence is that of Dual specificity protein kinase shkA (shkA) from Dictyostelium discoideum (Social amoeba).